The sequence spans 272 residues: Pantothenate synthetase (272 aa).

27–34 (MGALHNGH) provides a ligand contact to ATP. The active-site Proton donor is histidine 34. A (R)-pantoate-binding site is contributed by glutamine 58. Position 58 (glutamine 58) interacts with beta-alanine. 143–146 (GKKD) is a binding site for ATP. Position 149 (glutamine 149) interacts with (R)-pantoate. Residues valine 172 and 180–183 (LSSR) each bind ATP.

This sequence belongs to the pantothenate synthetase family. As to quaternary structure, homodimer.

Its subcellular location is the cytoplasm. The catalysed reaction is (R)-pantoate + beta-alanine + ATP = (R)-pantothenate + AMP + diphosphate + H(+). The protein operates within cofactor biosynthesis; (R)-pantothenate biosynthesis; (R)-pantothenate from (R)-pantoate and beta-alanine: step 1/1. Catalyzes the condensation of pantoate with beta-alanine in an ATP-dependent reaction via a pantoyl-adenylate intermediate. The chain is Pantothenate synthetase from Aliarcobacter butzleri (strain RM4018) (Arcobacter butzleri).